Here is a 327-residue protein sequence, read N- to C-terminus: DNA repair and recombination protein RadA (327 aa).

113 to 120 (GEFGSGKS) contacts ATP.

The protein belongs to the eukaryotic RecA-like protein family.

In terms of biological role, involved in DNA repair and in homologous recombination. Binds and assemble on single-stranded DNA to form a nucleoprotein filament. Hydrolyzes ATP in a ssDNA-dependent manner and promotes DNA strand exchange between homologous DNA molecules. This is DNA repair and recombination protein RadA from Ignicoccus hospitalis (strain KIN4/I / DSM 18386 / JCM 14125).